Consider the following 75-residue polypeptide: Microcin H47 (75 aa).

Positions 1–15 are excised as a propeptide; sequence MREITESQLRYISGA. The chain crosses the membrane as a helical span at residues 30-50; it reads AIVGALAGIPGGPLGVVVGAV.

It is found in the secreted. The protein resides in the host cell membrane. Bactericidal antibiotic. Active on bacteria phylogenetically related to the producing strain. In Escherichia coli O6:H1 (strain CFT073 / ATCC 700928 / UPEC), this protein is Microcin H47 (mchB).